Consider the following 105-residue polypeptide: N(2)-fixation sustaining protein CowN (105 aa).

The protein belongs to the CowN family.

In terms of biological role, is required to sustain N(2)-dependent growth in the presence of low levels of carbon monoxide (CO). Probably acts by protecting the N(2) fixation ability of the nitrogenase complex, which is inactivated in the presence of CO. In Tolumonas auensis (strain DSM 9187 / NBRC 110442 / TA 4), this protein is N(2)-fixation sustaining protein CowN.